Here is a 235-residue protein sequence, read N- to C-terminus: Phosphoribosylaminoimidazole-succinocarboxamide synthase (235 aa).

Belongs to the SAICAR synthetase family.

It catalyses the reaction 5-amino-1-(5-phospho-D-ribosyl)imidazole-4-carboxylate + L-aspartate + ATP = (2S)-2-[5-amino-1-(5-phospho-beta-D-ribosyl)imidazole-4-carboxamido]succinate + ADP + phosphate + 2 H(+). It functions in the pathway purine metabolism; IMP biosynthesis via de novo pathway; 5-amino-1-(5-phospho-D-ribosyl)imidazole-4-carboxamide from 5-amino-1-(5-phospho-D-ribosyl)imidazole-4-carboxylate: step 1/2. This chain is Phosphoribosylaminoimidazole-succinocarboxamide synthase, found in Streptococcus thermophilus (strain ATCC BAA-250 / LMG 18311).